The chain runs to 124 residues: UPF0538 protein (124 aa).

The protein belongs to the UPF0538 family.

The chain is UPF0538 protein from Dictyostelium discoideum (Social amoeba).